The sequence spans 677 residues: WD and tetratricopeptide repeats protein 1 (677 aa).

WD repeat units follow at residues 45-84 (GHSG…KLLS), 88-129 (GHTA…TIHM), 132-172 (DHTN…KHSE), 182-222 (GQLV…NHRK), and 265-305 (RLRV…RPYT). At serine 353 the chain carries Phosphoserine. 2 TPR repeats span residues 362-395 (LERV…APHN) and 397-432 (MLYG…NPCH). The disordered stretch occupies residues 487-509 (NDGEEKKGPGGGAPVRLRSTSRK). The residue at position 511 (serine 511) is a Phosphoserine. WD repeat units follow at residues 535 to 575 (NTTT…LVRV) and 578 to 617 (GDES…EDLT). The segment at 655–677 (SSGGAGASDDEDSSEGQVQCRPS) is disordered.

Its pathway is protein modification; protein ubiquitination. Functionally, may function as a substrate receptor for CUL4-DDB1 E3 ubiquitin-protein ligase complex. This Homo sapiens (Human) protein is WD and tetratricopeptide repeats protein 1 (WDTC1).